A 187-amino-acid chain; its full sequence is 1,6-anhydro-N-acetylmuramyl-L-alanine amidase AmpD (187 aa).

The 139-residue stretch at 29-167 folds into the N-acetylmuramoyl-L-alanine amidase domain; that stretch reads SLLVVHNISL…APDRKTDPGP (139 aa). A Zn(2+)-binding site is contributed by His-34. Residue Glu-116 is the Proton acceptor of the active site. His-154 and Asp-164 together coordinate Zn(2+).

This sequence belongs to the N-acetylmuramoyl-L-alanine amidase 2 family. Requires Zn(2+) as cofactor.

It is found in the cytoplasm. It carries out the reaction Hydrolyzes the link between N-acetylmuramoyl residues and L-amino acid residues in certain cell-wall glycopeptides.. Involved in cell wall peptidoglycan recycling. Specifically cleaves the amide bond between the lactyl group of N-acetylmuramic acid and the alpha-amino group of the L-alanine in degradation products containing an anhydro N-acetylmuramyl moiety. The polypeptide is 1,6-anhydro-N-acetylmuramyl-L-alanine amidase AmpD (ampD) (Salmonella typhimurium (strain SL1344)).